Reading from the N-terminus, the 156-residue chain is Ribosomal RNA large subunit methyltransferase H (156 aa).

S-adenosyl-L-methionine contacts are provided by residues Leu-73, Gly-104, and 123–128; that span reads LSPLTL.

Belongs to the RNA methyltransferase RlmH family. In terms of assembly, homodimer.

It is found in the cytoplasm. It carries out the reaction pseudouridine(1915) in 23S rRNA + S-adenosyl-L-methionine = N(3)-methylpseudouridine(1915) in 23S rRNA + S-adenosyl-L-homocysteine + H(+). In terms of biological role, specifically methylates the pseudouridine at position 1915 (m3Psi1915) in 23S rRNA. This is Ribosomal RNA large subunit methyltransferase H from Sodalis glossinidius (strain morsitans).